Here is a 206-residue protein sequence, read N- to C-terminus: Ras-related protein Ral-A (206 aa).

21–28 contributes to the GTP binding site; it reads GSGGVGKS. The short motif at 43–51 is the Effector region element; sequence YEPTKADSY. GTP contacts are provided by residues 68–72 and 127–130; these read DTAGQ and NKSD. Ser194 carries the phosphoserine modification. Position 203 is a cysteine methyl ester (Cys203). Residue Cys203 is the site of S-geranylgeranyl cysteine attachment. The propeptide at 204–206 is removed in mature form; it reads CIL.

It belongs to the small GTPase superfamily. Ras family. As to quaternary structure, interacts (via effector domain) with RALBP1; during mitosis, recruits RALBP1 to the mitochondrion where it promotes DNM1L phosphorylation and mitochondrial fission. Interacts with EXOC2/Sec5 and EXOC8/Exo84; binding to EXOC2 and EXOC8 is mutually exclusive. Interacts with Clostridium exoenzyme C3. Interacts with RALGPS1. Interacts with LPAR1 and LPAR2. Interacts with GRK2 in response to LPAR1 activation. RALA and GRK2 binding to LPAR1 is mutually exclusive. Interacts with CDC42. In terms of processing, prenylation is essential for membrane localization. Post-translationally, phosphorylated. Phosphorylation at Ser-194 by AURKA/Aurora kinase A, during mitosis, induces RALA localization to the mitochondrion where it regulates mitochondrial fission.

The protein localises to the cell membrane. It is found in the cleavage furrow. Its subcellular location is the midbody. The protein resides in the midbody ring. It localises to the mitochondrion. It catalyses the reaction GTP + H2O = GDP + phosphate + H(+). Its activity is regulated as follows. Alternates between an inactive form bound to GDP and an active form bound to GTP. Activated by a guanine nucleotide-exchange factor (GEF) and inactivated by a GTPase-activating protein (GAP). Its function is as follows. Multifunctional GTPase involved in a variety of cellular processes including gene expression, cell migration, cell proliferation, oncogenic transformation and membrane trafficking. Accomplishes its multiple functions by interacting with distinct downstream effectors. Acts as a GTP sensor for GTP-dependent exocytosis of dense core vesicles. Key regulator of LPAR1 signaling and competes with GRK2 for binding to LPAR1 thus affecting the signaling properties of the receptor. Required for anchorage-independent proliferation of transformed cells. The RALA-exocyst complex regulates integrin-dependent membrane raft exocytosis and growth signaling. During mitosis, supports the stabilization and elongation of the intracellular bridge between dividing cells. Cooperates with EXOC2 to recruit other components of the exocyst to the early midbody. During mitosis, also controls mitochondrial fission by recruiting to the mitochondrion RALBP1, which mediates the phosphorylation and activation of DNM1L by the mitotic kinase cyclin B-CDK1. The chain is Ras-related protein Ral-A (Rala) from Mus musculus (Mouse).